A 423-amino-acid polypeptide reads, in one-letter code: Glutamate-1-semialdehyde 2,1-aminomutase (423 aa).

Lys259 is subject to N6-(pyridoxal phosphate)lysine.

This sequence belongs to the class-III pyridoxal-phosphate-dependent aminotransferase family. HemL subfamily. The cofactor is pyridoxal 5'-phosphate.

It is found in the cytoplasm. It carries out the reaction (S)-4-amino-5-oxopentanoate = 5-aminolevulinate. The protein operates within porphyrin-containing compound metabolism; protoporphyrin-IX biosynthesis; 5-aminolevulinate from L-glutamyl-tRNA(Glu): step 2/2. In Methanobrevibacter smithii (strain ATCC 35061 / DSM 861 / OCM 144 / PS), this protein is Glutamate-1-semialdehyde 2,1-aminomutase.